A 488-amino-acid polypeptide reads, in one-letter code: Multidrug resistance outer membrane protein MdtP (488 aa).

The signal sequence occupies residues 1–23 (MINRQLSRLLLCSILGSTTLISG). Cys24 is lipidated: N-palmitoyl cysteine. Residue Cys24 is the site of S-diacylglycerol cysteine attachment.

It belongs to the outer membrane factor (OMF) (TC 1.B.17) family. In terms of assembly, could be part of a tripartite efflux system composed of MdtN, MdtO and MdtP.

It localises to the cell outer membrane. Functionally, could be involved in resistance to puromycin, acriflavine and tetraphenylarsonium chloride. This chain is Multidrug resistance outer membrane protein MdtP (mdtP), found in Shigella flexneri.